The following is a 359-amino-acid chain: MPLSRLIIQQFRNIKACDIQLSAGFNFLIGPNGSGKTSVLEAIYLLGHGRSFKSSLTGRVIQNECDELFVHGRFLNSDQFELPIGINKQRDGSTEVKIGGQSGQKLAQLAQVLPLQLIHPEGFDLLTDGPKHRRAFIDWGVFHTEPAFYDAWGRFKRLNKQRNALLKTASSYRELSYWDQEMARLAENISQWRSLYIEQMKTVAETICQTFLPEFEIQLKYYRGWDKDTPYQEILEKNFERDQSLGYTFSGPNKADLRIKVNGTPVEDVLSRGQLKLMVCALRVAQGQHLTAMTGKQCIYLIDDFASELDSQRRKRLADCLKETGAQVFVSSITENQIADMLDDNGKLFHVEHGRIESN.

30–37 (GPNGSGKT) is an ATP binding site.

The protein belongs to the RecF family.

The protein resides in the cytoplasm. The RecF protein is involved in DNA metabolism; it is required for DNA replication and normal SOS inducibility. RecF binds preferentially to single-stranded, linear DNA. It also seems to bind ATP. The polypeptide is DNA replication and repair protein RecF (Vibrio parahaemolyticus serotype O3:K6 (strain RIMD 2210633)).